Reading from the N-terminus, the 324-residue chain is Bacilliredoxin reductase Bdr (324 aa).

Residue C220 is modified to S-bacillithiol cysteine disulfide.

As to quaternary structure, interacts with BrxC. It depends on FAD as a cofactor. In terms of processing, C-terminal Cys can react with bacillithiol (BSH) to form mixed disulfides. S-bacillithiolation protects Cys residues against overoxidation by acting as a redox switch in response to oxidative stress.

S-bacillithiolation is the formation of mixed disulfide bonds between protein thiols and the general thiol reductant bacillithiol (BSH) under oxidative stress. BSH is an equivalent of glutathione (GSH) in Firmicutes. This protein is a NADPH-dependent bacilliredoxin reductase, which debacillithiolates (removes BSH) the S-bacillithiolated BrxB (BrxB-SSB), and to a lesser extent BrxC (BrxC-SSB). Involved in a redox cascade increasing the efficacy of BrxB function by reducing BrxB-SSB and thus reactivating it. Has NADPH-dependent oxidase activity under aerobic conditions producing hydrogen peroxide (H(2)O(2)). This Bacillus subtilis (strain 168) protein is Bacilliredoxin reductase Bdr.